The sequence spans 177 residues: Large ribosomal subunit protein uL6 (177 aa).

The protein belongs to the universal ribosomal protein uL6 family. As to quaternary structure, part of the 50S ribosomal subunit.

This protein binds to the 23S rRNA, and is important in its secondary structure. It is located near the subunit interface in the base of the L7/L12 stalk, and near the tRNA binding site of the peptidyltransferase center. The sequence is that of Large ribosomal subunit protein uL6 from Bradyrhizobium sp. (strain ORS 278).